The following is a 428-amino-acid chain: 3-phosphoshikimate 1-carboxyvinyltransferase (428 aa).

3-phosphoshikimate is bound by residues K19, S20, and R24. Phosphoenolpyruvate is bound at residue K19. Phosphoenolpyruvate contacts are provided by G91 and R119. S164, Q166, D312, and K339 together coordinate 3-phosphoshikimate. Q166 contributes to the phosphoenolpyruvate binding site. Residue D312 is the Proton acceptor of the active site. The phosphoenolpyruvate site is built by R343 and R386.

Belongs to the EPSP synthase family. As to quaternary structure, monomer.

The protein resides in the cytoplasm. The enzyme catalyses 3-phosphoshikimate + phosphoenolpyruvate = 5-O-(1-carboxyvinyl)-3-phosphoshikimate + phosphate. Its pathway is metabolic intermediate biosynthesis; chorismate biosynthesis; chorismate from D-erythrose 4-phosphate and phosphoenolpyruvate: step 6/7. In terms of biological role, catalyzes the transfer of the enolpyruvyl moiety of phosphoenolpyruvate (PEP) to the 5-hydroxyl of shikimate-3-phosphate (S3P) to produce enolpyruvyl shikimate-3-phosphate and inorganic phosphate. The sequence is that of 3-phosphoshikimate 1-carboxyvinyltransferase from Bacillus velezensis (strain DSM 23117 / BGSC 10A6 / LMG 26770 / FZB42) (Bacillus amyloliquefaciens subsp. plantarum).